The primary structure comprises 420 residues: L-rhamnose isomerase (420 aa).

Residues His262, Asp294, and Asp296 each contribute to the Mn(2+) site.

The protein belongs to the rhamnose isomerase family. In terms of assembly, homotetramer. It depends on Mn(2+) as a cofactor.

Its subcellular location is the cytoplasm. It carries out the reaction L-rhamnopyranose = L-rhamnulose. Its pathway is carbohydrate degradation; L-rhamnose degradation; glycerone phosphate from L-rhamnose: step 1/3. Functionally, catalyzes the interconversion of L-rhamnose and L-rhamnulose. The polypeptide is L-rhamnose isomerase (Pectobacterium carotovorum subsp. carotovorum (strain PC1)).